The sequence spans 480 residues: Ribulose bisphosphate carboxylase large chain (480 aa).

The propeptide occupies 1-2; the sequence is MS. P3 is subject to N-acetylproline. K14 carries the post-translational modification N6,N6,N6-trimethyllysine. Residues N123 and T173 each contribute to the substrate site. The active-site Proton acceptor is K175. K177 contributes to the substrate binding site. Positions 201, 203, and 204 each coordinate Mg(2+). Residue K201 is modified to N6-carboxylysine. The active-site Proton acceptor is the H294. R295, H327, and S379 together coordinate substrate.

The protein belongs to the RuBisCO large chain family. Type I subfamily. As to quaternary structure, heterohexadecamer of 8 large chains and 8 small chains; disulfide-linked. The disulfide link is formed within the large subunit homodimers. Mg(2+) is required as a cofactor. The disulfide bond which can form in the large chain dimeric partners within the hexadecamer appears to be associated with oxidative stress and protein turnover.

The protein localises to the plastid. Its subcellular location is the chloroplast. The enzyme catalyses 2 (2R)-3-phosphoglycerate + 2 H(+) = D-ribulose 1,5-bisphosphate + CO2 + H2O. It carries out the reaction D-ribulose 1,5-bisphosphate + O2 = 2-phosphoglycolate + (2R)-3-phosphoglycerate + 2 H(+). Its function is as follows. RuBisCO catalyzes two reactions: the carboxylation of D-ribulose 1,5-bisphosphate, the primary event in carbon dioxide fixation, as well as the oxidative fragmentation of the pentose substrate in the photorespiration process. Both reactions occur simultaneously and in competition at the same active site. The protein is Ribulose bisphosphate carboxylase large chain of Rivina humilis (Rougeplant).